The chain runs to 118 residues: Cysteine-rich and transmembrane domain-containing protein 1 (118 aa).

Low complexity-rich tracts occupy residues 1-54 and 64-74; these read MNYE…QGYP and YTAQPGYQGYP. Residues 1 to 82 form a disordered region; sequence MNYEQPPAYT…YPQPGPPTNT (82 aa). Residues 95–112 form a helical membrane-spanning segment; it reads SGEQACLATCWAALCCCC.

The protein belongs to the CYSTM1 family.

The protein localises to the membrane. This chain is Cysteine-rich and transmembrane domain-containing protein 1 (cystm1), found in Danio rerio (Zebrafish).